The sequence spans 584 residues: MKAIIVLLMVVTSNADRICTGITSSNSPHVVKTATQGEVNVTGVIPLTTTPTKSHFANLKGTQTRGKLCPNCFNCTDLDVALGRPKCMGNTPSAKVSILHEVKPATSGCFPIMHDRTKIRQLPNLLRGYENIRLSTSNVINTETAPGGPYKVGTSGSCPNVANGNGFFNTMAWVIPKDNNKTAINPVTVEVPYICSEGEDQITVWGFHSDDKTQMERLYGDSNPQKFTSSANGVTTHYVSQIGGFPNQTEDEGLKQSGRIVVDYMVQKPGKTGTIVYQRGILLPQKVWCASGRSKVIKGSLPLIGEADCLHEKYGGLNKSKPYYTGEHAKAIGNCPIWVKTPLKLANGTKYRPPAKLLKERGFFGAIAGFLEGGWEGMIAGWHGYTSHGAHGVAVAADLKSTQEAINKITKNLNYLSELEVKNLQRLSGAMNELHDEILELDEKVDDLRADTISSQIELAVLLSNEGIINSEDEHLLALERKLKKMLGPSAVEIGNGCFETKHKCNQTCLDRIAAGTFNAGDFSLPTFDSLNITAASLNDDGLDNHTILLYYSTAASSLAVTLMIAIFIVYMVSRDNVSCSICL.

A signal peptide spans 1–15 (MKAIIVLLMVVTSNA). Topologically, residues 16-552 (DRICTGITSS…LDNHTILLYY (537 aa)) are extracellular. 4 cysteine pairs are disulfide-bonded: cysteine 19-cysteine 498, cysteine 75-cysteine 87, cysteine 109-cysteine 158, and cysteine 505-cysteine 509. N-linked (GlcNAc...) asparagine; by host glycans are attached at residues asparagine 40 and asparagine 74. 7 N-linked (GlcNAc...) asparagine; by host glycosylation sites follow: asparagine 180, asparagine 247, asparagine 318, asparagine 347, asparagine 506, asparagine 532, and asparagine 545. Residues 553–573 (STAASSLAVTLMIAIFIVYMV) form a helical membrane-spanning segment. Topologically, residues 574–584 (SRDNVSCSICL) are cytoplasmic. Residues cysteine 580 and cysteine 583 are each lipidated (S-palmitoyl cysteine; by host).

Belongs to the influenza viruses hemagglutinin family. Homotrimer of disulfide-linked HA1-HA2. In terms of processing, palmitoylated. In natural infection, inactive HA is matured into HA1 and HA2 outside the cell by one or more trypsin-like, arginine-specific endoprotease secreted by the bronchial epithelial cells. One identified protease that may be involved in this process is secreted in lungs by club cells.

Its subcellular location is the virion membrane. The protein resides in the host apical cell membrane. Binds to sialic acid-containing receptors on the cell surface, bringing about the attachment of the virus particle to the cell. Plays a major role in the determination of host range restriction and virulence. Class I viral fusion protein. Responsible for penetration of the virus into the cell cytoplasm by mediating the fusion of the membrane of the endocytosed virus particle with the endosomal membrane. Low pH in endosomes induce an irreversible conformational change in HA2, releasing the fusion hydrophobic peptide. Several trimers are required to form a competent fusion pore. This is Hemagglutinin from Influenza B virus (strain B/Lee/1940).